We begin with the raw amino-acid sequence, 306 residues long: tRNA dimethylallyltransferase (306 aa).

12–19 (GPTGTKKS) lines the ATP pocket.

This sequence belongs to the IPP transferase family. As to quaternary structure, monomer. It depends on Mg(2+) as a cofactor.

It carries out the reaction adenosine(37) in tRNA + dimethylallyl diphosphate = N(6)-dimethylallyladenosine(37) in tRNA + diphosphate. Its function is as follows. Catalyzes the transfer of a dimethylallyl group onto the adenine at position 37 in tRNAs that read codons beginning with uridine, leading to the formation of N6-(dimethylallyl)adenosine (i(6)A). This is tRNA dimethylallyltransferase from Mycoplasmoides gallisepticum (strain R(low / passage 15 / clone 2)) (Mycoplasma gallisepticum).